Here is a 735-residue protein sequence, read N- to C-terminus: Zinc finger CCCH domain-containing protein 14 (735 aa).

Residue methionine 1 is modified to N-acetylmethionine. Residues 78–153 are disordered; the sequence is TEPSSLKSPD…RHSYDDGAST (76 aa). A Phosphoserine modification is found at serine 85. Glycyl lysine isopeptide (Lys-Gly) (interchain with G-Cter in SUMO2) cross-links involve residues lysine 99, lysine 139, lysine 175, and lysine 198. Polar residues predominate over residues 131–144; the sequence is VSTSSQEQKSTNVR. The residue at position 240 (serine 240) is a Phosphoserine. Glycyl lysine isopeptide (Lys-Gly) (interchain with G-Cter in SUMO2) cross-links involve residues lysine 245, lysine 283, and lysine 295. Residues 308-351 form a disordered region; the sequence is FSHDGEEEEEDEDYGTRIGSLSSSVSVPAKPERRPSLPPSKQAN. Serine 309, serine 327, and serine 343 each carry phosphoserine. Residue lysine 357 is modified to N6-acetyllysine; alternate. Residue lysine 357 forms a Glycyl lysine isopeptide (Lys-Gly) (interchain with G-Cter in SUMO2); alternate linkage. Lysine 378 is covalently cross-linked (Glycyl lysine isopeptide (Lys-Gly) (interchain with G-Cter in SUMO2)). A phosphoserine mark is found at serine 390 and serine 409. The tract at residues 399-431 is disordered; sequence VQGQNRAPRISPPVKEEEAKGDNTGKSQGTQQR. A compositionally biased stretch (basic and acidic residues) spans 412–421; the sequence is VKEEEAKGDN. Lysine 413 participates in a covalent cross-link: Glycyl lysine isopeptide (Lys-Gly) (interchain with G-Cter in SUMO2). A compositionally biased stretch (polar residues) spans 422–431; it reads TGKSQGTQQR. A Glycyl lysine isopeptide (Lys-Gly) (interchain with G-Cter in SUMO2) cross-link involves residue lysine 489. 4 positions are modified to phosphoserine: serine 498, serine 515, serine 527, and serine 620. 5 consecutive C3H1-type zinc fingers follow at residues 595–620, 621–640, 641–656, 681–698, and 700–718; these read EKLL…HPIS, PCKA…VHPN, CKYD…PFTH, CRYF…YHPK, and CRFN…HPTI.

Belongs to the ZC3H14 family. In terms of assembly, homodimer; facilitating circular RNAs (circRNAs) formation. Associates with the spliceosome. Interacts with HOOK2. Interacts with ZFC3H1 in a RNase-sensitive manner. Expressed in hippocampal pyramidal neurons (at protein level). Expressed in kidney, liver, muscle, heart brain and testes. Expressed in hippocampal pyramidal neurons.

The protein resides in the nucleus speckle. Its function is as follows. RNA-binding protein involved in the biogenesis of circular RNAs (circRNAs), which are produced by back-splicing circularization of pre-mRNAs. Acts by binding to both exon-intron boundary and 3'-UTR of pre-mRNAs to promote circRNA biogenesis through dimerization and the association with the spliceosome. Required for spermatogenesis via involvement in circRNA biogenesis. Regulates the pre-mRNA processing of ATP5MC1; preventing its degradation. Also binds the poly(A) tail of mRNAs; controlling poly(A) length in neuronal cells. The sequence is that of Zinc finger CCCH domain-containing protein 14 from Mus musculus (Mouse).